The primary structure comprises 456 residues: Protein disulfide-isomerase TMX3 (456 aa).

Residues 1 to 29 form the signal peptide; the sequence is MANAVGRRSWAALRLCAAVILLDLAVCKG. The Thioredoxin domain maps to 30–131; sequence FVEDLNESFK…KDDIIEFAHR (102 aa). The Lumenal portion of the chain corresponds to 30-378; sequence FVEDLNESFK…TIVSIFKSSP (349 aa). N-linked (GlcNAc...) asparagine glycosylation is present at asparagine 35. Residues cysteine 56 and cysteine 59 each act as nucleophile in the active site. A disulfide bridge links cysteine 56 with cysteine 59. Asparagine 261 and asparagine 316 each carry an N-linked (GlcNAc...) asparagine glycan. Residues 379–399 traverse the membrane as a helical segment; the sequence is LMGCFLFGLPLGVISIMCYGI. At 400 to 456 the chain is on the cytoplasmic side; sequence YTADTDGGYIEERYEVSKSEMENQEQIEESKEQESSSGGSLAPTVQEPKDVLEKKKD. Positions 416-456 are disordered; it reads SKSEMENQEQIEESKEQESSSGGSLAPTVQEPKDVLEKKKD. A compositionally biased stretch (basic and acidic residues) spans 446 to 456; the sequence is EPKDVLEKKKD. The Di-lysine motif signature appears at 453–456; it reads KKKD.

Belongs to the protein disulfide isomerase family.

Its subcellular location is the endoplasmic reticulum membrane. The enzyme catalyses Catalyzes the rearrangement of -S-S- bonds in proteins.. Functionally, probable disulfide isomerase, which participates in the folding of proteins containing disulfide bonds. May act as a dithiol oxidase. Acts as a regulator of endoplasmic reticulum-mitochondria contact sites via its ability to regulate redox signals. The protein is Protein disulfide-isomerase TMX3 (Tmx3) of Mus musculus (Mouse).